Here is a 179-residue protein sequence, read N- to C-terminus: Peptide deformylase (179 aa).

The Fe cation site is built by C102 and H144. Residue E145 is part of the active site. A Fe cation-binding site is contributed by H148.

This sequence belongs to the polypeptide deformylase family. It depends on Fe(2+) as a cofactor.

The catalysed reaction is N-terminal N-formyl-L-methionyl-[peptide] + H2O = N-terminal L-methionyl-[peptide] + formate. Functionally, removes the formyl group from the N-terminal Met of newly synthesized proteins. Requires at least a dipeptide for an efficient rate of reaction. N-terminal L-methionine is a prerequisite for activity but the enzyme has broad specificity at other positions. This Wolbachia pipientis subsp. Culex pipiens (strain wPip) protein is Peptide deformylase.